The sequence spans 317 residues: Small ribosomal subunit protein uS2 (317 aa).

Disordered regions lie at residues 1–30 and 293–317; these read MENENLKVEQATTAENNMAEKADDSKASKE and RSFEQNSAEGVKTVEKTTTSTEVAE. Residues 18-30 show a composition bias toward basic and acidic residues; the sequence is MAEKADDSKASKE. Low complexity predominate over residues 308-317; the sequence is KTTTSTEVAE.

Belongs to the universal ribosomal protein uS2 family.

The chain is Small ribosomal subunit protein uS2 from Mycoplasmopsis agalactiae (strain NCTC 10123 / CIP 59.7 / PG2) (Mycoplasma agalactiae).